A 199-amino-acid chain; its full sequence is NAD(P)H dehydrogenase (quinone) (199 aa).

The 187-residue stretch at 4-190 folds into the Flavodoxin-like domain; sequence VLVLYYSAYG…AGARYQGRVI (187 aa). FMN-binding positions include 10 to 15 and 78 to 80; these read SAYGHI and TRF. Tyr12 contributes to the NAD(+) binding site. Trp98 serves as a coordination point for substrate. FMN contacts are provided by residues 113–119 and His134; that span reads STATQHG.

This sequence belongs to the WrbA family. FMN serves as cofactor.

The catalysed reaction is a quinone + NADH + H(+) = a quinol + NAD(+). It catalyses the reaction a quinone + NADPH + H(+) = a quinol + NADP(+). This is NAD(P)H dehydrogenase (quinone) from Bradyrhizobium sp. (strain BTAi1 / ATCC BAA-1182).